The primary structure comprises 334 residues: GTP 3',8-cyclase (334 aa).

In terms of domain architecture, Radical SAM core spans 11-236 (GFNRKIDYLR…ESTESSQGPA (226 aa)). Arg20 contacts GTP. 2 residues coordinate [4Fe-4S] cluster: Cys27 and Cys31. S-adenosyl-L-methionine is bound at residue Tyr33. Cys34 lines the [4Fe-4S] cluster pocket. GTP is bound at residue Arg69. Gly73 lines the S-adenosyl-L-methionine pocket. GTP is bound at residue Thr100. Ser124 provides a ligand contact to S-adenosyl-L-methionine. Lys161 contributes to the GTP binding site. Met195 lines the S-adenosyl-L-methionine pocket. Positions 260 and 263 each coordinate [4Fe-4S] cluster. Position 265–267 (265–267 (RVR)) interacts with GTP. [4Fe-4S] cluster is bound at residue Cys277.

The protein belongs to the radical SAM superfamily. MoaA family. Monomer and homodimer. It depends on [4Fe-4S] cluster as a cofactor.

It carries out the reaction GTP + AH2 + S-adenosyl-L-methionine = (8S)-3',8-cyclo-7,8-dihydroguanosine 5'-triphosphate + 5'-deoxyadenosine + L-methionine + A + H(+). Its pathway is cofactor biosynthesis; molybdopterin biosynthesis. Functionally, catalyzes the cyclization of GTP to (8S)-3',8-cyclo-7,8-dihydroguanosine 5'-triphosphate. The sequence is that of GTP 3',8-cyclase from Pseudomonas putida (strain W619).